Here is a 169-residue protein sequence, read N- to C-terminus: Phosphopantetheine adenylyltransferase (169 aa).

Ser-10 contributes to the substrate binding site. Residues 10 to 11 (SF) and His-18 contribute to the ATP site. The substrate site is built by Lys-42, Thr-79, and Arg-93. Residues 94–96 (GLR), Glu-104, and 129–135 (VRPITAT) contribute to the ATP site.

It belongs to the bacterial CoaD family. In terms of assembly, homohexamer. It depends on Mg(2+) as a cofactor.

Its subcellular location is the cytoplasm. The enzyme catalyses (R)-4'-phosphopantetheine + ATP + H(+) = 3'-dephospho-CoA + diphosphate. The protein operates within cofactor biosynthesis; coenzyme A biosynthesis; CoA from (R)-pantothenate: step 4/5. Its function is as follows. Reversibly transfers an adenylyl group from ATP to 4'-phosphopantetheine, yielding dephospho-CoA (dPCoA) and pyrophosphate. This Rhodopseudomonas palustris (strain TIE-1) protein is Phosphopantetheine adenylyltransferase.